The chain runs to 214 residues: Osteoclast-stimulating factor 1 (214 aa).

An SH3 domain is found at 12–71 (GQVKVFRALYTFEPRTPDELYFEEGDILYIADMSDTNWWKGTCKGKTGLIPSNYVAEQAE). ANK repeat units follow at residues 72–101 (SIDN…GVNG), 105–135 (AGST…ELNQ), and 139–168 (LGDT…RTDL).

It is found in the cytoplasm. Its function is as follows. Induces bone resorption, acting probably through a signaling cascade which results in the secretion of factor(s) enhancing osteoclast formation and activity. This chain is Osteoclast-stimulating factor 1 (ostf1), found in Xenopus laevis (African clawed frog).